Here is a 268-residue protein sequence, read N- to C-terminus: Zinc finger protein SNAI2 (268 aa).

The segment at 1–20 is SNAG domain; sequence MPRSFLVKKHFNASKKPNYS. Residues 80–117 are disordered; that stretch reads PASLGRVSPPPPSDTSSKDHSGSESPISDEEERLQSKL. 4 C2H2-type zinc fingers span residues 128-150, 159-181, 185-207, and 213-235; these read FQCN…KQLH, FSCK…IRTH, CVCK…IRTH, and FSCS…LQTH. The C2H2-type 5; atypical zinc-finger motif lies at 241-264; that stretch reads YQCKSCSKTFSRMSLLHKHEESGC.

It belongs to the snail C2H2-type zinc-finger protein family. In terms of assembly, interacts (via SNAG domain) with LIMD1 (via LIM domains), WTIP (via LIM domains) and AJUBA (via LIM domains). Interacts (via zinc fingers) with KPNA2, KPNB1, and TNPO1. May interact (via zinc fingers) with IPO7. In terms of processing, phosphorylated by GSK3B. Once phosphorylated, it becomes a target for ubiquitination. Ubiquitinated by the SCF(FBXO11) complex; ubiquitination requires previous GSK3B-mediated SNAI2 phosphorylation.

It is found in the nucleus. It localises to the cytoplasm. Functionally, transcriptional repressor that modulates both activator-dependent and basal transcription. Involved in the generation and migration of neural crest cells. Plays a role in mediating RAF1-induced transcriptional repression of the TJ protein, occludin (OCLN) and subsequent oncogenic transformation of epithelial cells. Represses BRCA2 expression by binding to its E2-box-containing silencer and recruiting CTBP1 and HDAC1 in breast cells. In epidermal keratinocytes, binds to the E-box in ITGA3 promoter and represses its transcription. Involved in the regulation of ITGB1 and ITGB4 expression and cell adhesion and proliferation in epidermal keratinocytes. Binds to E-box2 domain of BSG and activates its expression during TGFB1-induced epithelial-mesenchymal transition (EMT) in hepatocytes. Represses E-Cadherin/CDH1 transcription via E-box elements. Involved in osteoblast maturation. Binds to RUNX2 and SOC9 promoters and may act as a positive and negative transcription regulator, respectively, in osteoblasts. Binds to CXCL12 promoter via E-box regions in mesenchymal stem cells and osteoblasts. Plays an essential role in TWIST1-induced EMT and its ability to promote invasion and metastasis. In Bos taurus (Bovine), this protein is Zinc finger protein SNAI2 (SNAI2).